The sequence spans 886 residues: Linoleate 9S-lipoxygenase 5 (886 aa).

Residues 35–180 (IEGEVVVMKK…RYRSDRVFFS (146 aa)) enclose the PLAT domain. The Lipoxygenase domain occupies 183–886 (AYLPSETPEL…GKGIPNSVSI (704 aa)). The interval 234–266 (GPDSVRPVLGGSPELPYPRRGKTGRKSTKSDPK) is disordered. Fe cation contacts are provided by His542, His547, His733, Asn737, and Ile886.

The protein belongs to the lipoxygenase family. Fe cation serves as cofactor. As to expression, expressed in roots.

The catalysed reaction is (9Z,12Z)-octadecadienoate + O2 = (9S)-hydroperoxy-(10E,12Z)-octadecadienoate. The enzyme catalyses (9Z,12Z,15Z)-octadecatrienoate + O2 = (9S)-hydroperoxy-(10E,12Z,15Z)-octadecatrienoate. It participates in lipid metabolism; oxylipin biosynthesis. Its function is as follows. 9S-lipoxygenase that can use linoleic acid or linolenic acid as substrates. Plant lipoxygenases may be involved in a number of diverse aspects of plant physiology including growth and development, pest resistance, and senescence or responses to wounding. Catalyzes the hydroperoxidation of lipids containing a cis,cis-1,4-pentadiene structure. Function as regulators of root development by controlling the emergence of lateral roots. 9S-lypoxygenase-derived oxylipins may play an antagonistic role to ethylene signaling in the control of responses involving oxidative stress, lipid peroxidation and plant defense. LOX5-derived oxylipins may facilitate performance of green peach aphid (Myzus persicae) on foliage. 9S-lypoxygenase-derived oxylipins are engaged during infection to control the balance between salicylic acid (SA) and jasmonate (JA) signaling to facilitate infection by the fungal pathogen Fusarium graminearum. 9S-lypoxygenase-derived oxylipins activate brassinosteroid signaling to promote cell wall-based defense and limit pathogen infection. Does not seem to contribute to the oxidation of free fatty acids during seed aging. This is Linoleate 9S-lipoxygenase 5 from Arabidopsis thaliana (Mouse-ear cress).